Consider the following 201-residue polypeptide: Holliday junction branch migration complex subunit RuvA (201 aa).

The domain I stretch occupies residues 1-63 (MIASVRGEVL…EDSMTLYGFA (63 aa)). The interval 64-142 (DTEARDLFGL…LVPVQAGPPG (79 aa)) is domain II. Residues 143 to 153 (STPAVAATPVR) form a flexible linker region. The tract at residues 153–201 (REQVVEALTGLGFPLKQAEQALDTVLAEQPAADTSTALRAALSLLGKNR) is domain III.

Belongs to the RuvA family. As to quaternary structure, homotetramer. Forms an RuvA(8)-RuvB(12)-Holliday junction (HJ) complex. HJ DNA is sandwiched between 2 RuvA tetramers; dsDNA enters through RuvA and exits via RuvB. An RuvB hexamer assembles on each DNA strand where it exits the tetramer. Each RuvB hexamer is contacted by two RuvA subunits (via domain III) on 2 adjacent RuvB subunits; this complex drives branch migration. In the full resolvosome a probable DNA-RuvA(4)-RuvB(12)-RuvC(2) complex forms which resolves the HJ.

The protein localises to the cytoplasm. The RuvA-RuvB-RuvC complex processes Holliday junction (HJ) DNA during genetic recombination and DNA repair, while the RuvA-RuvB complex plays an important role in the rescue of blocked DNA replication forks via replication fork reversal (RFR). RuvA specifically binds to HJ cruciform DNA, conferring on it an open structure. The RuvB hexamer acts as an ATP-dependent pump, pulling dsDNA into and through the RuvAB complex. HJ branch migration allows RuvC to scan DNA until it finds its consensus sequence, where it cleaves and resolves the cruciform DNA. The sequence is that of Holliday junction branch migration complex subunit RuvA from Nocardia farcinica (strain IFM 10152).